We begin with the raw amino-acid sequence, 465 residues long: Chromosomal replication initiator protein DnaA (465 aa).

The interval 1–85 (MSGFWESCLQ…IALVIGSGKA (85 aa)) is domain I, interacts with DnaA modulators. The tract at residues 85–129 (ATAARIQATTTDSGQNAPANPATTSEKRTAASEKARGKGSNYEKS) is domain II. A compositionally biased stretch (polar residues) spans 93-108 (TTTDSGQNAPANPATT). The interval 93-125 (TTTDSGQNAPANPATTSEKRTAASEKARGKGSN) is disordered. Residues 109–125 (SEKRTAASEKARGKGSN) are compositionally biased toward basic and acidic residues. The segment at 130–346 (RLFPSFTFDN…GALKKVLAYS (217 aa)) is domain III, AAA+ region. ATP is bound by residues Gly-174, Gly-176, Lys-177, and Thr-178. The tract at residues 347–465 (SFHGRVIALD…LHVLLQVLKG (119 aa)) is domain IV, binds dsDNA.

The protein belongs to the DnaA family. Oligomerizes as a right-handed, spiral filament on DNA at oriC.

It is found in the cytoplasm. In terms of biological role, plays an essential role in the initiation and regulation of chromosomal replication. ATP-DnaA binds to the origin of replication (oriC) to initiate formation of the DNA replication initiation complex once per cell cycle. Binds the DnaA box (a 9 base pair repeat at the origin) and separates the double-stranded (ds)DNA. Forms a right-handed helical filament on oriC DNA; dsDNA binds to the exterior of the filament while single-stranded (ss)DNA is stabiized in the filament's interior. The ATP-DnaA-oriC complex binds and stabilizes one strand of the AT-rich DNA unwinding element (DUE), permitting loading of DNA polymerase. After initiation quickly degrades to an ADP-DnaA complex that is not apt for DNA replication. Binds acidic phospholipids. This is Chromosomal replication initiator protein DnaA from Dechloromonas aromatica (strain RCB).